The sequence spans 182 residues: UPF0301 protein NMC1274 (182 aa).

This sequence belongs to the UPF0301 (AlgH) family.

The sequence is that of UPF0301 protein NMC1274 from Neisseria meningitidis serogroup C / serotype 2a (strain ATCC 700532 / DSM 15464 / FAM18).